The primary structure comprises 233 residues: Eosinophil granule major basic protein 1 (233 aa).

The signal sequence occupies residues 1–15 (MKLLLLLALLLGAVS). A propeptide spans 16-114 (TRHLKVDTSS…VKFFSRPGYK (99 aa)) (acidic). Residues 24-96 (SSLQSLRGEE…SELDVSPEDI (73 aa)) are disordered. The segment covering 42-57 (AEGATREATAGALMPL) has biased composition (low complexity). Positions 58–93 (PEEEEMEGASGSEDDPEEEEEEEEEVEFSSELDVSP) are enriched in acidic residues. Positions 132–233 (WVCQRCYRGN…GKRRPFVCTY (102 aa)) constitute a C-type lectin domain. 2 disulfides stabilise this stretch: Cys134–Cys231 and Cys208–Cys223.

Nitrated.

The protein localises to the cytoplasmic granule. MBP may play some important roles in the allergic reactions and inflammations, since MBP is capable of releasing histamine from mast cells and damaging the epithelial cells of bronchial tubes. Antiparasitic and antibiotic. This is Eosinophil granule major basic protein 1 (MBP1) from Cavia porcellus (Guinea pig).